Reading from the N-terminus, the 363-residue chain is Outer membrane protein P2 (363 aa).

A signal peptide spans 1 to 20; it reads MKKTLAALIVGAFAASAANA.

The protein belongs to the Gram-negative porin family. As to quaternary structure, homotrimer.

It localises to the cell outer membrane. In terms of biological role, forms pores that allow passive diffusion of small molecules across the outer membrane. The protein is Outer membrane protein P2 (ompP2) of Haemophilus influenzae.